Consider the following 220-residue polypeptide: Deoxyribose-phosphate aldolase (220 aa).

The Proton donor/acceptor role is filled by Asp-89. The active-site Schiff-base intermediate with acetaldehyde is Lys-151. The Proton donor/acceptor role is filled by Lys-180.

It belongs to the DeoC/FbaB aldolase family. DeoC type 1 subfamily.

It is found in the cytoplasm. It carries out the reaction 2-deoxy-D-ribose 5-phosphate = D-glyceraldehyde 3-phosphate + acetaldehyde. It functions in the pathway carbohydrate degradation; 2-deoxy-D-ribose 1-phosphate degradation; D-glyceraldehyde 3-phosphate and acetaldehyde from 2-deoxy-alpha-D-ribose 1-phosphate: step 2/2. Its function is as follows. Catalyzes a reversible aldol reaction between acetaldehyde and D-glyceraldehyde 3-phosphate to generate 2-deoxy-D-ribose 5-phosphate. This chain is Deoxyribose-phosphate aldolase, found in Streptococcus gordonii (strain Challis / ATCC 35105 / BCRC 15272 / CH1 / DL1 / V288).